Reading from the N-terminus, the 58-residue chain is Small ribosomal subunit protein bS21 (58 aa).

The segment at 37-58 (FYDKPSVKKRAKSKAAAKYRGR) is disordered. Residues 43-58 (VKKRAKSKAAAKYRGR) are compositionally biased toward basic residues.

The protein belongs to the bacterial ribosomal protein bS21 family.

This chain is Small ribosomal subunit protein bS21 (rpsU), found in Chlamydia muridarum (strain MoPn / Nigg).